The sequence spans 75 residues: Defensin J1-1 (75 aa).

Positions 1–27 are cleaved as a signal peptide; that stretch reads MAGFSKVVATIFLMMLLVFATDMMAEA. 4 cysteine pairs are disulfide-bonded: C30-C74, C41-C61, C47-C68, and C51-C70.

The protein belongs to the DEFL family. Monomer. In terms of tissue distribution, expressed in orange and red ripe fruit and to a lesser extent in mature, green fruit. Present in trace in young, green fruit.

The protein localises to the secreted. Its function is as follows. Plant defense peptide with antifungal activity against F.oxysporum and B.cinerea. This Capsicum annuum (Capsicum pepper) protein is Defensin J1-1.